We begin with the raw amino-acid sequence, 133 residues long: Small ribosomal subunit protein uS8 (133 aa).

Belongs to the universal ribosomal protein uS8 family. Part of the 30S ribosomal subunit. Contacts proteins S5 and S12.

One of the primary rRNA binding proteins, it binds directly to 16S rRNA central domain where it helps coordinate assembly of the platform of the 30S subunit. The sequence is that of Small ribosomal subunit protein uS8 from Cyanothece sp. (strain PCC 7425 / ATCC 29141).